Here is a 235-residue protein sequence, read N- to C-terminus: Probable tetraspanin tspB (235 aa).

Residues 1-23 (MVDTTNLIPNTPRYLKVPLIAFN) are Cytoplasmic-facing. Residues 24 to 44 (TILWVLGLVLVIIGSIGVSFF) traverse the membrane as a helical segment. Residues 45 to 68 (SNFKDFTKVSKASAALSNLTTGAP) lie on the Extracellular side of the membrane. An N-linked (GlcNAc...) asparagine glycan is attached at Asn-62. Residues 69–89 (AGVLVIGIFFVILTVIGCFVA) form a helical membrane-spanning segment. Residues 90 to 93 (GKEK) are Cytoplasmic-facing. The chain crosses the membrane as a helical span at residues 94–114 (LVGLVIYTMLMLIILVALIGV). Over 115 to 200 (GGKALTLHND…ISSNLYLVGA (86 aa)) the chain is Extracellular. Residues Asn-143 and Asn-159 are each glycosylated (N-linked (GlcNAc...) asparagine). Residues 201–221 (AAVSIGVIEFICMLFALFLII) traverse the membrane as a helical segment. Residues 222–235 (RICRAPRTKSYDYQ) lie on the Cytoplasmic side of the membrane.

It belongs to the tetraspanin (TM4SF) family.

It localises to the membrane. This chain is Probable tetraspanin tspB (tspB), found in Dictyostelium discoideum (Social amoeba).